The chain runs to 447 residues: Dual specificity protein phosphatase CDC14C (447 aa).

Residues 14 to 168 (PQDDVYVDIT…AMQYGFLNFN (155 aa)) form an a region. The interval 169–182 (SFNLDEYEHYEKAE) is linker. The b stretch occupies residues 183–349 (NGDLNWIIPD…EGDYFRQRLK (167 aa)). Residues 184–344 (GDLNWIIPDR…TSLWLEGDYF (161 aa)) form the Tyrosine-protein phosphatase domain. The active-site Phosphocysteine intermediate is C284. Residues 426–446 (FTLCSVVIWWIVCDYILPILL) traverse the membrane as a helical segment.

It belongs to the protein-tyrosine phosphatase family. Non-receptor class CDC14 subfamily.

It is found in the endoplasmic reticulum membrane. The catalysed reaction is O-phospho-L-tyrosyl-[protein] + H2O = L-tyrosyl-[protein] + phosphate. It carries out the reaction O-phospho-L-seryl-[protein] + H2O = L-seryl-[protein] + phosphate. It catalyses the reaction O-phospho-L-threonyl-[protein] + H2O = L-threonyl-[protein] + phosphate. In terms of biological role, dual-specificity phosphatase. Preferentially dephosphorylates proteins modified by proline-directed kinases. This is Dual specificity protein phosphatase CDC14C from Homo sapiens (Human).